Reading from the N-terminus, the 464-residue chain is Aspartyl protease AED1 (464 aa).

A signal peptide spans methionine 1–glycine 25. In terms of domain architecture, Peptidase A1 spans tyrosine 132 to alanine 460. Active-site residues include aspartate 150 and aspartate 345. Cysteine 384 and cysteine 425 are disulfide-bonded.

Belongs to the peptidase A1 family.

It is found in the secreted. It localises to the extracellular space. The protein localises to the apoplast. Aspartyl protease involved in a homeostatic feedback mechanism regulating systemic immunity. Has only mild or no influence on local defenses. Acts downstream of salicylic acid to suppress systemic immunity. This Arabidopsis thaliana (Mouse-ear cress) protein is Aspartyl protease AED1.